We begin with the raw amino-acid sequence, 1435 residues long: RNA-directed RNA polymerase VP1 (1435 aa).

Residues 604–880 (VLHNVLRPAY…KGVLGAPELF (277 aa)) form the RdRp catalytic domain.

Belongs to the reoviridae RNA-directed RNA polymerase family. Interacts with VP4.

It catalyses the reaction RNA(n) + a ribonucleoside 5'-triphosphate = RNA(n+1) + diphosphate. Its function is as follows. RNA-directed RNA polymerase involved in transcription and genome replication. Following infection, catalyzes the synthesis of fully conservative plus strands. After core assembly, which consists in recruitment of one capped plus-strand for each genomic segments and polymerase complexes, the polymerase switches mode and catalyzes the synthesis of complementary minus-strands. This chain is RNA-directed RNA polymerase VP1, found in Callospermophilus lateralis (Golden-mantled ground squirrel).